The sequence spans 112 residues: MKQVIAARTDIGMGQGKLAAQVAHASLNAYEYTDDRAVRRWKDEGQTKVVVKVGSERELYERSEEAKRAGLPTGLISDAGRTQLEPGTPTALAIGPAPDADVDQITGDLSLF.

The tract at residues 64–99 is disordered; that stretch reads EEAKRAGLPTGLISDAGRTQLEPGTPTALAIGPAPD.

Belongs to the PTH2 family.

It localises to the cytoplasm. It carries out the reaction an N-acyl-L-alpha-aminoacyl-tRNA + H2O = an N-acyl-L-amino acid + a tRNA + H(+). Functionally, the natural substrate for this enzyme may be peptidyl-tRNAs which drop off the ribosome during protein synthesis. The polypeptide is Peptidyl-tRNA hydrolase (Halobacterium salinarum (strain ATCC 29341 / DSM 671 / R1)).